The chain runs to 3414 residues: Genome polyprotein (3414 aa).

The disordered stretch occupies residues 1–30 (MVKKAILKGKGGGPPRRVSKETATKTRQPR). The Cytoplasmic segment spans residues 1-98 (MVKKAILKGK…LQKRGKRRSA (98 aa)). Residues 97–117 (SATDWMSWLLVITLLGMTIAA) constitute a propeptide, ER anchor for the capsid protein C, removed in mature form by serine protease NS3. Residues 99 to 119 (TDWMSWLLVITLLGMTIAATV) traverse the membrane as a helical segment. Residues 120 to 242 (RKERDGSTVI…HLTRVEGWVW (123 aa)) lie on the Extracellular side of the membrane. Asn144 is a glycosylation site (N-linked (GlcNAc...) asparagine; by host). Residues 243-260 (KNRLLALAMVTVVWLTLE) traverse the membrane as a helical segment. A topological domain (cytoplasmic) is located at residue Ser261. Residues 262–280 (VVTRVAVLVVLLCLAPVYA) form a helical membrane-spanning segment. Residues 281-727 (SRCTHLENRD…HTVLGGAFNS (447 aa)) are Extracellular-facing. Intrachain disulfides connect Cys283/Cys310, Cys340/Cys396, Cys340/Cys401, Cys354/Cys385, Cys372/Cys396, and Cys372/Cys401. Residues 378 to 391 (DRGWGNHCGLFGKG) are fusion peptide. Asn434 carries N-linked (GlcNAc...) asparagine; by host glycosylation. 2 disulfides stabilise this stretch: Cys466–Cys570 and Cys587–Cys618. Residues 728–748 (IFGGVGFLPKLLLGVALAWLG) traverse the membrane as a helical segment. Over 749–755 (LNMRNPT) the chain is Extracellular. A helical membrane pass occupies residues 756–776 (MSMSFLLAGVLVLAMTLGVGA). The Extracellular portion of the chain corresponds to 777-1132 (DVGCAVDTER…RSMVVADNGE (356 aa)). 6 disulfide bridges follow: Cys780–Cys791, Cys831–Cys920, Cys955–Cys1000, Cys1057–Cys1106, Cys1068–Cys1090, and Cys1089–Cys1093. N-linked (GlcNAc...) asparagine; by host glycans are attached at residues Asn861, Asn983, and Asn999. The chain crosses the membrane as a helical span at residues 1133–1153 (LLSEGGVPGIVALFVVLEYII). Residues 1154–1158 (RRRPS) are Cytoplasmic-facing. Residues 1159–1179 (TGSTVVWGGIVVLALLVTGMV) form a helical membrane-spanning segment. Over 1180–1187 (RMESLVRY) the chain is Lumenal. Residues 1188-1208 (VVAVGITFHLELGPEIVALML) traverse the membrane as a helical segment. The Cytoplasmic segment spans residues 1209-1293 (LQAVFELRVG…LLMALMTQQD (85 aa)). A helical membrane pass occupies residues 1294-1314 (VVTVHHGLVCFLSAASACSIW). Residues 1315–1327 (RLLRGHREQKGLT) are Lumenal-facing. The chain crosses the membrane as a helical span at residues 1328–1348 (WIVPLARLLGGEGSGIRLLAF). At 1349–1359 (WELSAHRGRRS) the chain is on the cytoplasmic side. Residues 1360–1377 (FSEPLTVVGVMLTLASGM) form a helical membrane-spanning segment. Residues 1378–1382 (MRHTS) lie on the Lumenal side of the membrane. Residues 1383–1403 (QEALCALAVASFLLLMLVLGT) form a helical membrane-spanning segment. Topologically, residues 1404 to 1454 (RKMQLVAEWSGCVEWHPELVNEGGEVSLRVRQDAMGNFHLTELEKEERMMA) are cytoplasmic. The interacts with and activates NS3 protease stretch occupies residues 1410–1449 (AEWSGCVEWHPELVNEGGEVSLRVRQDAMGNFHLTELEKE). An intramembrane region (helical) is located at residues 1455–1475 (FWLIAGLAASAIHWSGIIGVM). Residues 1476 to 2160 (GLWTLTKMLR…RMAERDAPEA (685 aa)) are Cytoplasmic-facing. The 180-residue stretch at 1490–1669 (SDLVFSGQGG…EAEKSRPNLP (180 aa)) folds into the Peptidase S7 domain. Catalysis depends on charge relay system; for serine protease NS3 activity residues His1543, Asp1567, and Ser1627. Residues 1675–1831 (TGWTSKGQIT…ESNGAITSEE (157 aa)) enclose the Helicase ATP-binding domain. 1688 to 1695 (MHPGSGKT) contributes to the ATP binding site. The DEAH box signature appears at 1779-1782 (DEAH). A Helicase C-terminal domain is found at 1841-2000 (DGFDWITEYE…TLRGPVATFY (160 aa)). Lys1883 is subject to N6-acetyllysine; by host. Residues 2161-2181 (FLTMVEMMVLGLATLGVIWCF) traverse the membrane as a helical segment. Residues 2182–2189 (VVRTSISR) are Lumenal-facing. The segment at residues 2190 to 2210 (MMLGTLVLLASLLLLWAGGVG) is an intramembrane region (helical). Tyr2211 is a topological domain (lumenal). A helical membrane pass occupies residues 2212–2232 (GNMAGVALIFYTLLTVLQPEA). Residues 2233–2244 (GKQRSSDDNKLA) lie on the Cytoplasmic side of the membrane. The chain crosses the membrane as a helical span at residues 2245 to 2265 (YFLLTLCSLAGLVAANEMGFL). Residues 2266-2299 (EKTKADLSTVLWSEREEPRPWSEWTNVDIQPARS) lie on the Lumenal side of the membrane. An intramembrane region (helical) is located at residues 2300–2320 (WGTYVLVVSLFTPYIIHQLQT). At 2321 to 2343 (KIQQLVNSAVASGAQAMRDLGGG) the chain is on the lumenal side. The helical intramembrane region spans 2344 to 2364 (APFFGVAGHVMTLGVVSLIGA). At 2365–2368 (TPTS) the chain is on the lumenal side. Residues 2369–2389 (LMVGVGLAALHLAIVVSGLEA) form a helical membrane-spanning segment. Residues 2390–2432 (ELTQRAHKVFFSAMVRNPMVDGDVINPFGEGEAKPALYERRMS) lie on the Cytoplasmic side of the membrane. A helical membrane pass occupies residues 2433 to 2453 (LVLAIVLCLMSVVMNRTVASI). Topologically, residues 2454–2477 (TEASAVGLAAAGQLLRPEADTLWT) are lumenal. The helical transmembrane segment at 2478-2498 (MPVACGMSGVVRGSLWGFLPL) threads the bilayer. At 2499–3414 (GHRLWLRASG…WELRLESSII (916 aa)) the chain is on the cytoplasmic side. The 265-residue stretch at 2512-2776 (GGSEGDTLGD…ELDLGVGTRC (265 aa)) folds into the mRNA cap 0-1 NS5-type MT domain. Ser2567 is an S-adenosyl-L-methionine binding site. Ser2567 carries the post-translational modification Phosphoserine. The For 2'-O-MTase activity role is filled by Lys2572. S-adenosyl-L-methionine contacts are provided by Gly2597, Trp2598, Thr2615, Ile2616, Asp2642, and Val2643. The For 2'-O-MTase activity role is filled by Asp2657. Ile2658 contributes to the S-adenosyl-L-methionine binding site. Residues Lys2694 and Glu2730 each act as for 2'-O-MTase activity in the active site. The interval 2730-2734 (EMYYS) is interaction with host SCRIB. Tyr2732 contacts S-adenosyl-L-methionine. Zn(2+) contacts are provided by Glu2950, His2954, Cys2959, and Cys2962. Residues 3040 to 3189 (GLFYADDTAG…RPLDDRFGKA (150 aa)) form the RdRp catalytic domain. Positions 3224, 3240, and 3359 each coordinate Zn(2+).

In the N-terminal section; belongs to the class I-like SAM-binding methyltransferase superfamily. mRNA cap 0-1 NS5-type methyltransferase family. As to quaternary structure, homodimer. Interacts (via N-terminus) with host EXOC1 (via C-terminus); this interaction results in EXOC1 degradation through the proteasome degradation pathway. Forms heterodimers with envelope protein E in the endoplasmic reticulum and Golgi. In terms of assembly, homodimer; in the endoplasmic reticulum and Golgi. Interacts with protein prM. Interacts with non-structural protein 1. As to quaternary structure, homodimer; Homohexamer when secreted. Interacts with envelope protein E. Interacts (via N-terminus) with serine protease NS3. In terms of assembly, forms a heterodimer with serine protease NS3. May form homooligomers. As to quaternary structure, forms a heterodimer with NS2B. Interacts with NS4B. Interacts with unphosphorylated RNA-directed RNA polymerase NS5; this interaction stimulates RNA-directed RNA polymerase NS5 guanylyltransferase activity. Interacts with serine protease NS3. In terms of assembly, homodimer. Interacts with host STAT2; this interaction inhibits the phosphorylation of the latter, and, when all viral proteins are present (polyprotein), targets STAT2 for degradation. Interacts with serine protease NS3. Interacts with host SCRIB; this interaction targets NS5 to the cell membrane periphery and nucleus, thereby allowing efficient host nuclear STAT1 inhibition. In terms of processing, specific enzymatic cleavages in vivo yield mature proteins. Cleavages in the lumen of endoplasmic reticulum are performed by host signal peptidase, whereas cleavages in the cytoplasmic side are performed by serine protease NS3. Signal cleavage at the 2K-4B site requires a prior NS3 protease-mediated cleavage at the 4A-2K site. Post-translationally, cleaved in post-Golgi vesicles by a host furin, releasing the mature small envelope protein M, and peptide pr. This cleavage is incomplete as up to 30% of viral particles still carry uncleaved prM. N-glycosylated. In terms of processing, N-glycosylated. The excreted form is glycosylated and this is required for efficient secretion of the protein from infected cells. Post-translationally, acetylated by host KAT5. Acetylation modulates NS3 RNA-binding and unwinding activities and plays an important positive role for viral replication. Phosphorylated on serines residues. This phosphorylation may trigger NS5 nuclear localization.

The protein resides in the virion. Its subcellular location is the host nucleus. It localises to the host cytoplasm. The protein localises to the host perinuclear region. It is found in the secreted. The protein resides in the virion membrane. Its subcellular location is the host endoplasmic reticulum membrane. The catalysed reaction is Selective hydrolysis of -Xaa-Xaa-|-Yaa- bonds in which each of the Xaa can be either Arg or Lys and Yaa can be either Ser or Ala.. The enzyme catalyses RNA(n) + a ribonucleoside 5'-triphosphate = RNA(n+1) + diphosphate. It carries out the reaction a ribonucleoside 5'-triphosphate + H2O = a ribonucleoside 5'-diphosphate + phosphate + H(+). It catalyses the reaction ATP + H2O = ADP + phosphate + H(+). The catalysed reaction is a 5'-end (5'-triphosphoguanosine)-ribonucleoside in mRNA + S-adenosyl-L-methionine = a 5'-end (N(7)-methyl 5'-triphosphoguanosine)-ribonucleoside in mRNA + S-adenosyl-L-homocysteine. The enzyme catalyses a 5'-end (N(7)-methyl 5'-triphosphoguanosine)-ribonucleoside in mRNA + S-adenosyl-L-methionine = a 5'-end (N(7)-methyl 5'-triphosphoguanosine)-(2'-O-methyl-ribonucleoside) in mRNA + S-adenosyl-L-homocysteine + H(+). In terms of biological role, plays a role in virus budding by binding to the cell membrane and gathering the viral RNA into a nucleocapsid that forms the core of a mature virus particle. During virus entry, may induce genome penetration into the host cytoplasm after hemifusion induced by the surface proteins. Can migrate to the cell nucleus where it modulates host functions. Functionally, inhibits RNA silencing by interfering with host Dicer. Prevents premature fusion activity of envelope proteins in trans-Golgi by binding to envelope protein E at pH6.0. After virion release in extracellular space, gets dissociated from E dimers. Its function is as follows. Acts as a chaperone for envelope protein E during intracellular virion assembly by masking and inactivating envelope protein E fusion peptide. prM is the only viral peptide matured by host furin in the trans-Golgi network probably to avoid catastrophic activation of the viral fusion activity in acidic Golgi compartment prior to virion release. prM-E cleavage is inefficient, and many virions are only partially matured. These uncleaved prM would play a role in immune evasion. In terms of biological role, may play a role in virus budding. Exerts cytotoxic effects by activating a mitochondrial apoptotic pathway through M ectodomain. May display a viroporin activity. Functionally, binds to host cell surface receptor and mediates fusion between viral and cellular membranes. Envelope protein is synthesized in the endoplasmic reticulum in the form of heterodimer with protein prM. They play a role in virion budding in the ER, and the newly formed immature particle is covered with 60 spikes composed of heterodimer between precursor prM and envelope protein E. The virion is transported to the Golgi apparatus where the low pH causes dissociation of PrM-E heterodimers and formation of E homodimers. prM-E cleavage is inefficient, and many virions are only partially matured. These uncleaved prM would play a role in immune evasion. Involved in immune evasion, pathogenesis and viral replication. Once cleaved off the polyprotein, is targeted to three destinations: the viral replication cycle, the plasma membrane and the extracellular compartment. Essential for viral replication. Required for formation of the replication complex and recruitment of other non-structural proteins to the ER-derived membrane structures. Excreted as a hexameric lipoparticle that plays a role against host immune response. Antagonizing the complement function. Binds to the host macrophages and dendritic cells. Inhibits signal transduction originating from Toll-like receptor 3 (TLR3). Its function is as follows. Component of the viral RNA replication complex that functions in virion assembly and antagonizes the host immune response. In terms of biological role, required cofactor for the serine protease function of NS3. May have membrane-destabilizing activity and form viroporins. Functionally, displays three enzymatic activities: serine protease, NTPase and RNA helicase. NS3 serine protease, in association with NS2B, performs its autocleavage and cleaves the polyprotein at dibasic sites in the cytoplasm: C-prM, NS2A-NS2B, NS2B-NS3, NS3-NS4A, NS4A-2K and NS4B-NS5. NS3 RNA helicase binds RNA and unwinds dsRNA in the 3' to 5' direction. Regulates the ATPase activity of the NS3 helicase activity. NS4A allows NS3 helicase to conserve energy during unwinding. Its function is as follows. Functions as a signal peptide for NS4B and is required for the interferon antagonism activity of the latter. In terms of biological role, induces the formation of ER-derived membrane vesicles where the viral replication takes place. Inhibits interferon (IFN)-induced host STAT1 phosphorylation and nuclear translocation, thereby preventing the establishment of cellular antiviral state by blocking the IFN-alpha/beta pathway. Inhibits STAT2 translocation in the nucleus after IFN-alpha treatment. Functionally, replicates the viral (+) and (-) genome, and performs the capping of genomes in the cytoplasm. NS5 methylates viral RNA cap at guanine N-7 and ribose 2'-O positions. Besides its role in genome replication, also prevents the establishment of cellular antiviral state by blocking the interferon-alpha/beta (IFN-alpha/beta) signaling pathway. Inhibits host TYK2 and STAT2 phosphorylation, thereby preventing activation of JAK-STAT signaling pathway. In Tick-borne encephalitis virus (strain Hypr) (TBEV), this protein is Genome polyprotein.